A 214-amino-acid chain; its full sequence is 3-isopropylmalate dehydratase small subunit (214 aa).

Belongs to the LeuD family. LeuD type 1 subfamily. Heterodimer of LeuC and LeuD.

It catalyses the reaction (2R,3S)-3-isopropylmalate = (2S)-2-isopropylmalate. It functions in the pathway amino-acid biosynthesis; L-leucine biosynthesis; L-leucine from 3-methyl-2-oxobutanoate: step 2/4. Functionally, catalyzes the isomerization between 2-isopropylmalate and 3-isopropylmalate, via the formation of 2-isopropylmaleate. The protein is 3-isopropylmalate dehydratase small subunit of Pseudomonas fluorescens (strain ATCC BAA-477 / NRRL B-23932 / Pf-5).